The following is a 490-amino-acid chain: 3-octaprenyl-4-hydroxybenzoate carboxy-lyase (490 aa).

N172 contacts Mn(2+). Residues 175-177 (IYR), 189-191 (RWL), and 194-195 (RG) each bind prenylated FMN. Mn(2+) is bound at residue E238. D287 (proton donor) is an active-site residue.

It belongs to the UbiD family. In terms of assembly, homohexamer. It depends on prenylated FMN as a cofactor. Mn(2+) serves as cofactor.

It is found in the cell membrane. The enzyme catalyses a 4-hydroxy-3-(all-trans-polyprenyl)benzoate + H(+) = a 2-(all-trans-polyprenyl)phenol + CO2. It participates in cofactor biosynthesis; ubiquinone biosynthesis. In terms of biological role, catalyzes the decarboxylation of 3-octaprenyl-4-hydroxy benzoate to 2-octaprenylphenol, an intermediate step in ubiquinone biosynthesis. In Idiomarina loihiensis (strain ATCC BAA-735 / DSM 15497 / L2-TR), this protein is 3-octaprenyl-4-hydroxybenzoate carboxy-lyase.